Consider the following 630-residue polypeptide: tRNA uridine 5-carboxymethylaminomethyl modification enzyme MnmG (630 aa).

Position 13–18 (13–18 (GGGHAG)) interacts with FAD. 273–287 (GPRYCPSIEDKVMRF) lines the NAD(+) pocket.

This sequence belongs to the MnmG family. As to quaternary structure, homodimer. Heterotetramer of two MnmE and two MnmG subunits. The cofactor is FAD.

The protein localises to the cytoplasm. Functionally, NAD-binding protein involved in the addition of a carboxymethylaminomethyl (cmnm) group at the wobble position (U34) of certain tRNAs, forming tRNA-cmnm(5)s(2)U34. The chain is tRNA uridine 5-carboxymethylaminomethyl modification enzyme MnmG from Actinobacillus pleuropneumoniae serotype 7 (strain AP76).